The primary structure comprises 209 residues: V-type ATP synthase subunit D (209 aa).

The protein belongs to the V-ATPase D subunit family.

Produces ATP from ADP in the presence of a proton gradient across the membrane. This is V-type ATP synthase subunit D from Anaeromyxobacter dehalogenans (strain 2CP-C).